The primary structure comprises 407 residues: Cation efflux system protein CusB (407 aa).

Positions 1–28 (MKKIALIIGSMIAGGIISAAGFTWVAKA) are cleaved as a signal peptide.

Belongs to the membrane fusion protein (MFP) (TC 8.A.1) family. As to quaternary structure, the cus efflux system is composed of CusA, CusB, CusC and CusF.

In terms of biological role, part of a cation efflux system that mediates resistance to copper and silver. The polypeptide is Cation efflux system protein CusB (cusB) (Escherichia coli (strain K12)).